A 208-amino-acid chain; its full sequence is Methylthioribulose-1-phosphate dehydratase (208 aa).

Zn(2+) contacts are provided by His-99 and His-101.

The protein belongs to the aldolase class II family. MtnB subfamily. It depends on Zn(2+) as a cofactor.

It carries out the reaction 5-(methylsulfanyl)-D-ribulose 1-phosphate = 5-methylsulfanyl-2,3-dioxopentyl phosphate + H2O. The protein operates within amino-acid biosynthesis; L-methionine biosynthesis via salvage pathway; L-methionine from S-methyl-5-thio-alpha-D-ribose 1-phosphate: step 2/6. Its function is as follows. Catalyzes the dehydration of methylthioribulose-1-phosphate (MTRu-1-P) into 2,3-diketo-5-methylthiopentyl-1-phosphate (DK-MTP-1-P). This is Methylthioribulose-1-phosphate dehydratase from Aquifex aeolicus (strain VF5).